We begin with the raw amino-acid sequence, 340 residues long: Glycerol-3-phosphate dehydrogenase [NAD(P)+] (340 aa).

Residues S11, W12, R33, and K106 each coordinate NADPH. Sn-glycerol 3-phosphate contacts are provided by K106, G137, and S139. A141 serves as a coordination point for NADPH. Positions 192, 245, 255, 256, and 257 each coordinate sn-glycerol 3-phosphate. The Proton acceptor role is filled by K192. NADPH is bound at residue R256. Residues V280 and E282 each contribute to the NADPH site.

It belongs to the NAD-dependent glycerol-3-phosphate dehydrogenase family.

It localises to the cytoplasm. It carries out the reaction sn-glycerol 3-phosphate + NAD(+) = dihydroxyacetone phosphate + NADH + H(+). The enzyme catalyses sn-glycerol 3-phosphate + NADP(+) = dihydroxyacetone phosphate + NADPH + H(+). Its pathway is membrane lipid metabolism; glycerophospholipid metabolism. In terms of biological role, catalyzes the reduction of the glycolytic intermediate dihydroxyacetone phosphate (DHAP) to sn-glycerol 3-phosphate (G3P), the key precursor for phospholipid synthesis. This is Glycerol-3-phosphate dehydrogenase [NAD(P)+] from Bacillus anthracis (strain A0248).